A 131-amino-acid polypeptide reads, in one-letter code: Translation initiation factor 5A (131 aa).

Lys-37 carries the hypusine modification.

It belongs to the eIF-5A family.

The protein localises to the cytoplasm. Functions by promoting the formation of the first peptide bond. This chain is Translation initiation factor 5A, found in Methanococcus maripaludis (strain DSM 14266 / JCM 13030 / NBRC 101832 / S2 / LL).